The chain runs to 407 residues: Na(+)-translocating NADH-quinone reductase subunit F (407 aa).

Residues 3-23 form a helical membrane-spanning segment; that stretch reads IILGVVMFTLIVLALTVMILF. The 2Fe-2S ferredoxin-type domain maps to 32–126; sequence GDITIDINED…NLKIELPEEI (95 aa). Cys69, Cys75, Cys78, and Cys110 together coordinate [2Fe-2S] cluster. Positions 129 to 269 constitute an FAD-binding FR-type domain; sequence VKKWECEVIS…SGPFGEFFAK (141 aa).

The protein belongs to the NqrF family. Composed of six subunits; NqrA, NqrB, NqrC, NqrD, NqrE and NqrF. [2Fe-2S] cluster serves as cofactor. It depends on FAD as a cofactor.

It is found in the cell inner membrane. It catalyses the reaction a ubiquinone + n Na(+)(in) + NADH + H(+) = a ubiquinol + n Na(+)(out) + NAD(+). In terms of biological role, NQR complex catalyzes the reduction of ubiquinone-1 to ubiquinol by two successive reactions, coupled with the transport of Na(+) ions from the cytoplasm to the periplasm. The first step is catalyzed by NqrF, which accepts electrons from NADH and reduces ubiquinone-1 to ubisemiquinone by a one-electron transfer pathway. This chain is Na(+)-translocating NADH-quinone reductase subunit F, found in Yersinia enterocolitica serotype O:8 / biotype 1B (strain NCTC 13174 / 8081).